We begin with the raw amino-acid sequence, 122 residues long: MRHYEIVFIVHPDQSEQVPAMVERYKTMITEANGKIHRLEDWGRRQLAYPINKIHKAHYVLMNIETTPEVVGELETAFRFNDAVLRHLTIKTKHAVTEASPMLGGEKAKNLLVGAAEEAAAQ.

The protein belongs to the bacterial ribosomal protein bS6 family.

In terms of biological role, binds together with bS18 to 16S ribosomal RNA. This chain is Small ribosomal subunit protein bS6, found in Neisseria gonorrhoeae (strain ATCC 700825 / FA 1090).